Reading from the N-terminus, the 209-residue chain is Translation initiation factor IF-3 (209 aa).

Belongs to the IF-3 family. As to quaternary structure, monomer.

The protein resides in the cytoplasm. In terms of biological role, IF-3 binds to the 30S ribosomal subunit and shifts the equilibrium between 70S ribosomes and their 50S and 30S subunits in favor of the free subunits, thus enhancing the availability of 30S subunits on which protein synthesis initiation begins. The protein is Translation initiation factor IF-3 of Chlorobium phaeovibrioides (strain DSM 265 / 1930) (Prosthecochloris vibrioformis (strain DSM 265)).